Here is a 466-residue protein sequence, read N- to C-terminus: UDP-N-acetylmuramate--L-alanine ligase (466 aa).

Residue 114-120 (GTHGKTT) coordinates ATP.

It belongs to the MurCDEF family.

Its subcellular location is the cytoplasm. The enzyme catalyses UDP-N-acetyl-alpha-D-muramate + L-alanine + ATP = UDP-N-acetyl-alpha-D-muramoyl-L-alanine + ADP + phosphate + H(+). It functions in the pathway cell wall biogenesis; peptidoglycan biosynthesis. Functionally, cell wall formation. In Chlorobium phaeobacteroides (strain DSM 266 / SMG 266 / 2430), this protein is UDP-N-acetylmuramate--L-alanine ligase.